Here is a 114-residue protein sequence, read N- to C-terminus: Large ribosomal subunit protein uL22c (114 aa).

This sequence belongs to the universal ribosomal protein uL22 family. Part of the 50S ribosomal subunit.

The protein resides in the plastid. The protein localises to the cyanelle. In terms of biological role, this protein binds specifically to 23S rRNA. The globular domain of the protein is located near the polypeptide exit tunnel on the outside of the subunit, while an extended beta-hairpin is found that lines the wall of the exit tunnel in the center of the 70S ribosome. The protein is Large ribosomal subunit protein uL22c (rpl22) of Cyanophora paradoxa.